The following is a 221-amino-acid chain: MALALAALAAVEPACGTGYQQLQNEEEPGEREQTAGDAPPPYSSISAESAAYFDYKDESGFPKPPSYNVATTLPSYDEAERTKAEATIPLVPGRDEDFVGRDDFDDADQLRIGNDGIFMLTFFMAFLFNWIGFFLSFCLTTSAAGRYGAISGFGLSLIKWILIVRFSTYFPGYFDGQYWLWWVFLVLGFLLFLRGFINYAKVRKMPETFSNLPRTRVLFIY.

A2 carries the post-translational modification N-acetylalanine. An interaction with UBE2L3 region spans residues A2–P41. The Cytoplasmic portion of the chain corresponds to A2 to G116. Positions C15–I45 are disordered. 3 short sequence motifs (PPxY motif) span residues P39–Y42, P64–Y67, and P74–Y76. The interaction with ITCH stretch occupies residues Y42–Y76. Residues I117 to F137 traverse the membrane as a helical segment. Over C138–A143 the chain is Extracellular. The chain crosses the membrane as a helical span at residues A144–V164. Residues R165–G172 are Cytoplasmic-facing. The chain crosses the membrane as a helical span at residues Y173–L193. Over R194–Y221 the chain is Extracellular.

Forms heterodimers with NDFIP2. Interacts with several E3 ubiquitin-protein ligases, including ITCH, NEDD4, NEDD4L and WWP2. The interaction with NEDD4, NEDD4L and ITCH leads to relocalization of these proteins to exosomes and eventually to exosomal secretion. Interacts with SR1402. Interacts with SLC11A2/DMT1. Interacts with PTEN. May interact with phosphorylated EGFR. Interacts with BRAT1. Interacts with KCNH2. Interacts with MAVS. Part of a complex containing ITCH, NDFIP1 and MAP3K7. Interacts (via N-terminus) with UBE2L3; the interaction mediates recruitment of UBE2L3 to ITCH. Post-translationally, ubiquitinated by NEDD4; mono-, di- and polyubiquitinated forms are detected. Ubiquitination regulates its degradation. Undergoes transient tyrosine phosphorylation following EGF stimulation, most probably by catalyzed by SRC. Phosphorylation SRC is enhanced in the presence of NDFIP2 which may act as a scaffold to recruit SRC to NDFIP1.

It is found in the endosome membrane. It localises to the golgi apparatus membrane. The protein resides in the synapse. Its subcellular location is the synaptosome. The protein localises to the cell projection. It is found in the dendrite. It localises to the secreted. Its function is as follows. Activates HECT domain-containing E3 ubiquitin-protein ligases, including NEDD4 and ITCH, and consequently modulates the stability of their targets. As a result, controls many cellular processes. Prevents chronic T-helper cell-mediated inflammation by activating ITCH and thus controlling JUNB degradation. Promotes pancreatic beta cell death through degradation of JUNB and inhibition of the unfolded protein response, leading to reduction of insulin secretion. Restricts the production of pro-inflammatory cytokines in effector Th17 T-cells by promoting ITCH-mediated ubiquitination degradation of RORC. Together with NDFIP2, limits the cytokine signaling and expansion of effector Th2 T-cells by promoting degradation of JAK1, probably by ITCH- and NEDD4L-mediated ubiquitination. Regulates peripheral T-cell tolerance to self and foreign antigens, forcing the exit of naive CD4+ T-cells from the cell cycle before they become effector T-cells. Negatively regulates RLR-mediated antiviral response by promoting SMURF1-mediated ubiquitination and subsequent degradation of MAVS. Negatively regulates KCNH2 potassium channel activity by decreasing its cell-surface expression and interfering with channel maturation through recruitment of NEDD4L to the Golgi apparatus where it mediates KCNH2 degradation. In cortical neurons, mediates the ubiquitination of the divalent metal transporter SLC11A2/DMT1 by NEDD4L, leading to its down-regulation and protection of the cells from cobalt and iron toxicity. Important for normal development of dendrites and dendritic spines in cortex. Enhances the ubiquitination of BRAT1 mediated by: NEDD4, NEDD4L and ITCH and is required for the nuclear localization of ubiquitinated BRAT1. Enhances the ITCH-mediated ubiquitination of MAP3K7 by recruiting E2 ubiquitin-conjugating enzyme UBE2L3 to ITCH. Modulates EGFR signaling through multiple pathways. In particular, may regulate the ratio of AKT1-to-MAPK8 signaling in response to EGF, acting on AKT1 probably through PTEN destabilization and on MAPK8 through ITCH-dependent MAP2K4 inactivation. As a result, may control cell growth rate. Inhibits cell proliferation by promoting PTEN nuclear localization and changing its signaling specificity. This chain is NEDD4 family-interacting protein 1 (Ndfip1), found in Rattus norvegicus (Rat).